Reading from the N-terminus, the 316-residue chain is Olfactory receptor 2T11 (316 aa).

Residues 1–22 (MTNTSSSDFTLLGLLVNSEAAG) are Extracellular-facing. Asparagine 3 is a glycosylation site (N-linked (GlcNAc...) asparagine). Residues 23–46 (IVFTVILAVFLGAVTANLVMIFLI) form a helical membrane-spanning segment. Over 47-54 (QVDSRLHT) the chain is Cytoplasmic. Residues 55-76 (PMYFLLSQLSIMDTLFICTTVP) form a helical membrane-spanning segment. Topologically, residues 77–97 (KLLADMVSKEKIISFVACGIQ) are extracellular. Cysteine 94 and cysteine 186 are oxidised to a cystine. A helical transmembrane segment spans residues 98–117 (IFLYLTMIGSEFFLLGLMAY). Topologically, residues 118–136 (DCYVAVCNPLRYPVLMNRK) are cytoplasmic. The chain crosses the membrane as a helical span at residues 137 to 155 (KCLLLAAGAWFGGSLDGFL). At 156 to 192 (LTPITMNVPYCGSRSINHFFCEIPAVLKLACADTSLY) the chain is on the extracellular side. The helical transmembrane segment at 193–216 (ETLMYICCVLMLLIPISIISTSYS) threads the bilayer. At 217–233 (LILLTIHRMPSAEGRKK) the chain is on the cytoplasmic side. A helical membrane pass occupies residues 234 to 256 (AFTTCSSHLTVVSIFYGAAFYTY). Residues 257–269 (VLPQSFHTPEQDK) lie on the Extracellular side of the membrane. A helical transmembrane segment spans residues 270-289 (VVSAFYTIVTPMLNPLIYSL). The Cytoplasmic portion of the chain corresponds to 290–316 (RNKDVIGAFKKVFACCSSAQKVATSDA).

The protein belongs to the G-protein coupled receptor 1 family.

The protein resides in the cell membrane. Odorant receptor. This Homo sapiens (Human) protein is Olfactory receptor 2T11 (OR2T11).